The sequence spans 202 residues: Outer-membrane lipoprotein carrier protein (202 aa).

The first 18 residues, 1-18, serve as a signal peptide directing secretion; sequence MNKLFLILLLIFSHEVFS.

The protein belongs to the LolA family. Monomer.

It is found in the periplasm. Its function is as follows. Participates in the translocation of lipoproteins from the inner membrane to the outer membrane. Only forms a complex with a lipoprotein if the residue after the N-terminal Cys is not an aspartate (The Asp acts as a targeting signal to indicate that the lipoprotein should stay in the inner membrane). The polypeptide is Outer-membrane lipoprotein carrier protein (Legionella pneumophila (strain Corby)).